Consider the following 163-residue polypeptide: S-fimbrial adhesin protein SfaS (163 aa).

The first 22 residues, 1-22, serve as a signal peptide directing secretion; sequence MKLKAIILATGLINCIAFSAQA. Cys38 and Cys75 are disulfide-bonded. The involved in sialic acid binding stretch occupies residues 138 to 144; sequence KARAVSK.

The protein belongs to the fimbrial protein family.

The protein resides in the fimbrium. Functionally, fimbriae (also called pili), polar filaments radiating from the surface of the bacterium to a length of 0.5-1.5 micrometers and numbering 100-300 per cell, enable bacteria to colonize the epithelium of specific host organs. In terms of biological role, a minor fimbrial subunit, this protein is necessary for full expression of S-specific binding. S-fimbrial adhesins enable pathogenic E.coli causing urinary-tract infections or newborn meningitis to attach to glycoproteins terminating with alpha-sialic acid-(2-3)-beta-Gal. This protein binds to the alpha-sialic acid-(2-3)-beta-Gal and is thus responsible for erythrocyte recognition and hemagglutination. This Escherichia coli O6:K15:H31 (strain 536 / UPEC) protein is S-fimbrial adhesin protein SfaS (sfaS).